The chain runs to 120 residues: NAD(P)H-quinone oxidoreductase subunit 3, chloroplastic (120 aa).

The next 3 helical transmembrane spans lie at 9 to 29 (IFWAFLIISSVIPIFAFIISG), 60 to 80 (ICYYMFALVFVVFDVETVFLY), and 88 to 108 (ILGVSVFIEALIFVLILIVGS).

It belongs to the complex I subunit 3 family. In terms of assembly, NDH is composed of at least 16 different subunits, 5 of which are encoded in the nucleus.

The protein localises to the plastid. The protein resides in the chloroplast thylakoid membrane. It catalyses the reaction a plastoquinone + NADH + (n+1) H(+)(in) = a plastoquinol + NAD(+) + n H(+)(out). It carries out the reaction a plastoquinone + NADPH + (n+1) H(+)(in) = a plastoquinol + NADP(+) + n H(+)(out). Its function is as follows. NDH shuttles electrons from NAD(P)H:plastoquinone, via FMN and iron-sulfur (Fe-S) centers, to quinones in the photosynthetic chain and possibly in a chloroplast respiratory chain. The immediate electron acceptor for the enzyme in this species is believed to be plastoquinone. Couples the redox reaction to proton translocation, and thus conserves the redox energy in a proton gradient. This is NAD(P)H-quinone oxidoreductase subunit 3, chloroplastic from Morus indica (Mulberry).